We begin with the raw amino-acid sequence, 325 residues long: Succinylglutamate desuccinylase (325 aa).

Zn(2+)-binding residues include His51, Glu54, and His148. Glu211 is a catalytic residue.

This sequence belongs to the AspA/AstE family. Succinylglutamate desuccinylase subfamily. Requires Zn(2+) as cofactor.

It catalyses the reaction N-succinyl-L-glutamate + H2O = L-glutamate + succinate. It functions in the pathway amino-acid degradation; L-arginine degradation via AST pathway; L-glutamate and succinate from L-arginine: step 5/5. Its function is as follows. Transforms N(2)-succinylglutamate into succinate and glutamate. The chain is Succinylglutamate desuccinylase from Photorhabdus laumondii subsp. laumondii (strain DSM 15139 / CIP 105565 / TT01) (Photorhabdus luminescens subsp. laumondii).